The sequence spans 221 residues: Germin-like protein subfamily 1 member 15 (221 aa).

A signal peptide spans 1-21 (MKVSMSLILITFWALVTIAKA). A disulfide bridge links Cys31 with Cys48. In terms of domain architecture, Cupin type-1 spans 62 to 213 (SGLNQAGITN…AFQLDVNVVK (152 aa)). A glycan (N-linked (GlcNAc...) asparagine) is linked at Asn77. Residues His110, His112, Glu117, and His159 each coordinate Mn(2+).

The protein belongs to the germin family. Oligomer (believed to be a pentamer but probably hexamer).

It is found in the secreted. The protein resides in the extracellular space. Its subcellular location is the apoplast. May play a role in plant defense. Probably has no oxalate oxidase activity even if the active site is conserved. The protein is Germin-like protein subfamily 1 member 15 of Arabidopsis thaliana (Mouse-ear cress).